The following is a 133-amino-acid chain: Alpha-amylase inhibitor/endochitinase (133 aa).

Glu-30 acts as the Proton donor in catalysis.

This sequence belongs to the glycosyl hydrolase 19 family. Chitinase class I subfamily.

It carries out the reaction Random endo-hydrolysis of N-acetyl-beta-D-glucosaminide (1-&gt;4)-beta-linkages in chitin and chitodextrins.. Functionally, this protein functions both as an alpha-amylase inhibitor and as a chitinase. The polypeptide is Alpha-amylase inhibitor/endochitinase (Coix lacryma-jobi (Job's tears)).